The primary structure comprises 147 residues: DNA polymerase III subunit chi (147 aa).

This sequence belongs to the DNA polymerase III chi/HolC chain family. In terms of assembly, the DNA polymerase III holoenzyme complex contains at least 10 different subunits organized into 3 functionally essential subassemblies: the Pol III core, the beta sliding clamp processivity factor and the clamp-loading complex. The Pol III core (subunits alpha, epsilon and theta) contains the polymerase and the 3'-5' exonuclease proofreading activities. The polymerase is tethered to the template via the dimeric beta sliding clamp processivity factor. The clamp-loading complex (also called gamma complex) assembles the beta sliding clamp onto the primed template and plays a central role in the organization and communication at the replication fork. The clamp-loading complex contains delta, delta', psi and chi, and 3 copies of either or both of two different DnaX proteins, gamma and tau. The DNA replisome complex has a single clamp loader (3 tau and 1 each of delta, delta', psi and chi subunits) which binds 3 Pol III cores (1 core on the leading strand and 2 on the lagging strand) each with a beta sliding clamp dimer. Additional proteins in the replisome are other copies of gamma, psi (holD) and chi (this protein), SSB, DNA helicase and RNA primase. The clamp loader hydrolyzes ATP to assemble the beta processivity factor onto the primed template and plays a central role in the organization and communication at the replication fork. The only subunit of the DNA polymerase III holoenzyme known to interact with single-stranded DNA binding protein (SSB). Interacts directly with the psi subunit (holD). Interacts directly with DNA helicase YoaA. It binds to HolD and YoaA, but not both simultaneously.

It carries out the reaction DNA(n) + a 2'-deoxyribonucleoside 5'-triphosphate = DNA(n+1) + diphosphate. Its function is as follows. Part of the beta sliding clamp loading complex, which hydrolyzes ATP to load the beta clamp onto primed DNA to form the DNA replication pre-initiation complex. DNA polymerase III is a complex, multichain enzyme responsible for most of the replicative synthesis in bacteria. This DNA polymerase also exhibits 3' to 5' exonuclease activity. Genetically identified as involved in the repair of replication forks and tolerance of the chain-terminating nucleoside analog 3' AZT. This subunit may stabilize YoaA and/or stimulate the helicase activity of YoaA. This chain is DNA polymerase III subunit chi, found in Escherichia coli (strain K12).